We begin with the raw amino-acid sequence, 164 residues long: MEGSSIDVTFTAQLETGETLVSINITSYEETPGVLVEENRLYGTYESVFGFGNDALKYRLGDEFKTAASWEELPTDSDTQLYLWKAPQNLQKTFTYEVTLIYDYQEQSESGGSGSNSRSSSDTTEPTDPPAPVRKTLVKNYTKTIVGNWSRWANKLRKYAYARP.

Positions 107–136 (QSESGGSGSNSRSSSDTTEPTDPPAPVRKT) are disordered.

This is an uncharacterized protein from Escherichia coli (Bacteriophage T4).